The following is a 438-amino-acid chain: Xylose isomerase (438 aa).

Active-site residues include H100 and D103. Positions 231, 267, 270, 295, 306, 308, and 338 each coordinate Mg(2+).

Belongs to the xylose isomerase family. As to quaternary structure, homotetramer. The cofactor is Mg(2+).

The protein resides in the cytoplasm. The enzyme catalyses alpha-D-xylose = alpha-D-xylulofuranose. This Pseudomonas syringae pv. syringae (strain B728a) protein is Xylose isomerase.